The primary structure comprises 296 residues: Cbb3-type cytochrome c oxidase subunit CcoP (296 aa).

The Cytoplasmic segment spans residues methionine 1–lysine 31. The chain crosses the membrane as a helical span at residues tryptophan 32–proline 52. Topologically, residues alanine 53–lysine 296 are periplasmic. Cytochrome c domains follow at residues phenylalanine 108–asparagine 200 and glycine 207–glycine 293. Positions 121, 124, 125, 175, 220, 223, 224, and 270 each coordinate heme c.

Belongs to the CcoP / FixP family. In terms of assembly, component of the cbb3-type cytochrome c oxidase at least composed of CcoN, CcoO, CcoQ and CcoP. Heme c is required as a cofactor.

The protein resides in the cell inner membrane. It participates in energy metabolism; oxidative phosphorylation. In terms of biological role, C-type cytochrome. Part of the cbb3-type cytochrome c oxidase complex. CcoP subunit is required for transferring electrons from donor cytochrome c via its heme groups to CcoO subunit. From there, electrons are shuttled to the catalytic binuclear center of CcoN subunit where oxygen reduction takes place. The complex also functions as a proton pump. The polypeptide is Cbb3-type cytochrome c oxidase subunit CcoP (Azospirillum sp. (strain B510)).